Reading from the N-terminus, the 126-residue chain is Aspartate 1-decarboxylase (126 aa).

Residue Ser-25 is the Schiff-base intermediate with substrate; via pyruvic acid of the active site. Ser-25 carries the post-translational modification Pyruvic acid (Ser). Thr-57 serves as a coordination point for substrate. Tyr-58 (proton donor) is an active-site residue. Gly-73–Ala-75 provides a ligand contact to substrate.

It belongs to the PanD family. As to quaternary structure, heterooctamer of four alpha and four beta subunits. It depends on pyruvate as a cofactor. Is synthesized initially as an inactive proenzyme, which is activated by self-cleavage at a specific serine bond to produce a beta-subunit with a hydroxyl group at its C-terminus and an alpha-subunit with a pyruvoyl group at its N-terminus.

It localises to the cytoplasm. It carries out the reaction L-aspartate + H(+) = beta-alanine + CO2. Its pathway is cofactor biosynthesis; (R)-pantothenate biosynthesis; beta-alanine from L-aspartate: step 1/1. Its function is as follows. Catalyzes the pyruvoyl-dependent decarboxylation of aspartate to produce beta-alanine. The protein is Aspartate 1-decarboxylase of Acetivibrio thermocellus (strain ATCC 27405 / DSM 1237 / JCM 9322 / NBRC 103400 / NCIMB 10682 / NRRL B-4536 / VPI 7372) (Clostridium thermocellum).